The sequence spans 396 residues: Actin-related protein 6 (396 aa).

This sequence belongs to the actin family. ARP6 subfamily. In terms of assembly, interacts with CBX1 and CBX3.

It localises to the cytoplasm. The protein resides in the cytoskeleton. Its subcellular location is the nucleus. It is found in the nucleolus. Its function is as follows. Required for formation and/or maintenance of the proper nucleolar structure and function. Plays a dual role in the regulation of ribosomal DNA (rDNA) transcription. In the presence of high glucose, it maintains active rDNA transcription through H2A.Z deposition and under glucose starvation, is required for the repression of rDNA transcription, and this function may be independent of H2A.Z. This chain is Actin-related protein 6 (ACTR6), found in Gallus gallus (Chicken).